The primary structure comprises 93 residues: DNA-directed RNA polymerase subunit omega (93 aa).

The protein belongs to the RNA polymerase subunit omega family. The RNAP catalytic core consists of 2 alpha, 1 beta, 1 beta' and 1 omega subunit. When a sigma factor is associated with the core the holoenzyme is formed, which can initiate transcription.

The catalysed reaction is RNA(n) + a ribonucleoside 5'-triphosphate = RNA(n+1) + diphosphate. In terms of biological role, promotes RNA polymerase assembly. Latches the N- and C-terminal regions of the beta' subunit thereby facilitating its interaction with the beta and alpha subunits. The polypeptide is DNA-directed RNA polymerase subunit omega (Shewanella loihica (strain ATCC BAA-1088 / PV-4)).